Consider the following 718-residue polypeptide: Calpastatin (718 aa).

2 disordered regions span residues 1–189 (MNPA…MSST) and 210–238 (EKKT…LSSD). Over residues 20-29 (PHSKKRHRRQ) the composition is skewed to basic residues. Basic and acidic residues-rich tracts occupy residues 30–61 (DAKT…EHTK) and 68–104 (HASD…KPQD). A Glycyl lysine isopeptide (Lys-Gly) (interchain with G-Cter in SUMO2) cross-link involves residue Lys-32. Lys-49 carries the post-translational modification N6-acetyllysine. Residue Ser-86 is modified to Phosphoserine. Positions 114 to 124 (AAGTTAAPGKA) are enriched in low complexity. A phosphoserine mark is found at Ser-133, Ser-222, and Ser-243. Residues 170–222 (TQEDSTAYTGPEISDPMSSTYIEELGKREVTIPPKYRELLEKKTGVAGPPPDS) form an Inhibitory domain 1 repeat. Disordered stretches follow at residues 266–291 (ESAK…AMSD) and 320–509 (EAKR…QLPA). Residue Ser-290 is modified to Blocked amino end (Ser); in form erythrocyte. Residues 307–359 (EPELDLSSIKEVAEAKRKEEKVEKCGEDDETVPAEYRLKPATDKDGKPLLPEP) form an Inhibitory domain 2 repeat. 3 stretches are compositionally biased toward basic and acidic residues: residues 320–331 (EAKRKEEKVEKC), 342–377 (YRLK…ELSK), and 384–399 (SNEK…EESK). Phosphoserine occurs at positions 367, 369, and 376. Positions 400-411 (AAVPAPVAEAVP) are enriched in low complexity. Ser-444 carries the phosphoserine modification. Positions 446–496 (GRKEADPEEGKPVADKIKEKSKEEEREKLGEKEETIPPDYRLEEAKDKDGK) are enriched in basic and acidic residues. The stretch at 450–503 (ADPEEGKPVADKIKEKSKEEEREKLGEKEETIPPDYRLEEAKDKDGKPLLPSEP) is one Inhibitory domain 3 repeat. Residues Ser-520, Ser-531, Ser-579, and Ser-581 each carry the phosphoserine modification. The interval 543–718 (VSEVVSQSPA…KPKANEKNAS (176 aa)) is disordered. The segment covering 566-579 (PSNKELDDALDKLS) has biased composition (basic and acidic residues). One copy of the Inhibitory domain 4 repeat lies at 587–640 (PDPDENKPMEDKVKERAKKEHKDKLGERDDTIPPEYRHLLDQGEQDKPEKPPTK). Basic and acidic residues-rich tracts occupy residues 587-650 (PDPD…KPAG) and 706-718 (ETSK…KNAS).

Belongs to the protease inhibitor I27 (calpastatin) family.

Functionally, specific inhibition of calpain (calcium-dependent cysteine protease). Plays a key role in postmortem tenderization of meat and have been proposed to be involved in muscle protein degradation in living tissue. The polypeptide is Calpastatin (CAST) (Oryctolagus cuniculus (Rabbit)).